The following is a 65-amino-acid chain: Large ribosomal subunit protein bL35 (65 aa).

Composition is skewed to basic residues over residues 1-18 (MPKMKTKSAAAKRFKRTA), 31-44 (HRFHGKTKKQRRQL), and 55-65 (VKRYKKMIPAK). Positions 1–65 (MPKMKTKSAA…KRYKKMIPAK (65 aa)) are disordered.

The protein belongs to the bacterial ribosomal protein bL35 family.

The protein is Large ribosomal subunit protein bL35 of Limosilactobacillus fermentum (strain NBRC 3956 / LMG 18251) (Lactobacillus fermentum).